We begin with the raw amino-acid sequence, 295 residues long: Tissue factor (295 aa).

The N-terminal stretch at 1-28 is a signal peptide; sequence MAIPMRPRLLAALAPTFLGFLLLQVAVG. Over 29–252 the chain is Extracellular; sequence AGTPPGKAFN…TEQWKSVLGE (224 aa). 2 N-linked (GlcNAc...) asparagine glycosylation sites follow: Asn-38 and Asn-58. A disulfide bond links Cys-76 and Cys-84. Residues Asn-95, Asn-109, Asn-170, and Asn-201 are each glycosylated (N-linked (GlcNAc...) asparagine). A disulfide bridge links Cys-219 with Cys-242. The WKS motif motif lies at 246-248; that stretch reads WKS. The helical transmembrane segment at 253-275 threads the bilayer; sequence TLIIVGAVVFLVTVFIILLTISL. Cys-276 is lipidated: S-palmitoyl cysteine. Over 276–295 the chain is Cytoplasmic; sequence CKRRKNRAGQKRKNTPSRLA.

It belongs to the tissue factor family. As to quaternary structure, interacts with HSPE; the interaction, inhibited by heparin, promotes the generation of activated factor X and activates coagulation in the presence of activated factor VII.

The protein localises to the membrane. Its function is as follows. Initiates blood coagulation by forming a complex with circulating factor VII or VIIa. The [TF:VIIa] complex activates factors IX or X by specific limited proteolysis. TF plays a role in normal hemostasis by initiating the cell-surface assembly and propagation of the coagulation protease cascade. This Rattus norvegicus (Rat) protein is Tissue factor (F3).